The sequence spans 445 residues: Trigger factor (445 aa).

The PPIase FKBP-type domain occupies 162–247; it reads GDQVTIDAIG…IKAVHTAEPT (86 aa).

Belongs to the FKBP-type PPIase family. Tig subfamily.

The protein localises to the cytoplasm. It carries out the reaction [protein]-peptidylproline (omega=180) = [protein]-peptidylproline (omega=0). In terms of biological role, involved in protein export. Acts as a chaperone by maintaining the newly synthesized protein in an open conformation. Functions as a peptidyl-prolyl cis-trans isomerase. This is Trigger factor from Rickettsia akari (strain Hartford).